The primary structure comprises 476 residues: RNA-binding protein 45 (476 aa).

The segment at 1–20 (MDEAGSSASGGGFRPGVDSL) is disordered. RRM domains lie at 26–106 (SRIF…IAQS) and 121–195 (TRIF…PKNK). Lys34 is covalently cross-linked (Glycyl lysine isopeptide (Lys-Gly) (interchain with G-Cter in SUMO2)). A phosphoserine mark is found at Ser199 and Ser464. One can recognise an RRM 3 domain in the interval 392-464 (ERLFIVFNPH…VRLKVMLADS (73 aa)).

It is found in the cytoplasm. It localises to the nucleus. Its function is as follows. RNA-binding protein with binding specificity for poly(C). May play an important role in neural development. The polypeptide is RNA-binding protein 45 (RBM45) (Homo sapiens (Human)).